An 82-amino-acid chain; its full sequence is uncharacterized protein (82 aa).

The next 3 helical transmembrane spans lie at 4–26 (IAVL…AGHF), 31–50 (FWVA…VTLA), and 55–77 (SFIF…TLFL).

It localises to the cell membrane. This is an uncharacterized protein from Bacillus subtilis (strain 168).